A 597-amino-acid chain; its full sequence is Histidine protein kinase DivJ (597 aa).

A run of 6 helical transmembrane segments spans residues 40 to 57 (LGWLAAVCLAAAAALFTA), 62 to 81 (WPVWAALGAGALPALVSLIF), 91 to 109 (WLLVLWAVGGSLAAVLTGG), 110 to 125 (VGGAMAAWCLAPVAAA), 137 to 158 (GAALALIGACVAALTQLSGLAP), and 159 to 188 (AAPTGPLAFVLGFLALVTTGLGLAAGLLIG). Positions 335-553 (NMSHELRTPL…TVSVRLPVLL (219 aa)) constitute a Histidine kinase domain. Histidine 338 carries the post-translational modification Phosphohistidine; by autocatalysis. Over residues 561-585 (PTPPAAPEAPSAPEPAPTVEEPPPA) the composition is skewed to pro residues. The segment at 561 to 597 (PTPPAAPEAPSAPEPAPTVEEPPPASLGDNVIAFAPR) is disordered.

Its subcellular location is the cell membrane. It catalyses the reaction ATP + protein L-histidine = ADP + protein N-phospho-L-histidine.. Functionally, kinase required for the regulation of cell division and differentiation. Is part of a signal transduction pathway, activating PleD by phosphorylation. The chain is Histidine protein kinase DivJ (divJ) from Caulobacter vibrioides (strain ATCC 19089 / CIP 103742 / CB 15) (Caulobacter crescentus).